Reading from the N-terminus, the 428-residue chain is Adenylosuccinate synthetase (428 aa).

GTP-binding positions include 12-18 (GDEGKGK) and 40-42 (GHT). Asp-13 acts as the Proton acceptor in catalysis. Residues Asp-13 and Gly-40 each coordinate Mg(2+). IMP is bound by residues 13 to 16 (DEGK), 38 to 41 (NAGH), Thr-130, Arg-144, Gln-225, Thr-240, and Arg-304. The active-site Proton donor is His-41. 300 to 306 (TTTGRPR) contributes to the substrate binding site. GTP contacts are provided by residues Arg-306, 332 to 334 (KLD), and 414 to 416 (SVG).

This sequence belongs to the adenylosuccinate synthetase family. As to quaternary structure, homodimer. Mg(2+) serves as cofactor.

Its subcellular location is the cytoplasm. It catalyses the reaction IMP + L-aspartate + GTP = N(6)-(1,2-dicarboxyethyl)-AMP + GDP + phosphate + 2 H(+). The protein operates within purine metabolism; AMP biosynthesis via de novo pathway; AMP from IMP: step 1/2. Plays an important role in the de novo pathway of purine nucleotide biosynthesis. Catalyzes the first committed step in the biosynthesis of AMP from IMP. The sequence is that of Adenylosuccinate synthetase from Caldanaerobacter subterraneus subsp. tengcongensis (strain DSM 15242 / JCM 11007 / NBRC 100824 / MB4) (Thermoanaerobacter tengcongensis).